The chain runs to 277 residues: Putative ankyrin repeat protein L81 (277 aa).

2 ANK repeats span residues phenylalanine 150–glutamine 179 and glutamine 183–glutamine 215.

The protein is Putative ankyrin repeat protein L81 of Acanthamoeba polyphaga (Amoeba).